Reading from the N-terminus, the 808-residue chain is Zinc finger protein 841 (808 aa).

Residue Lys137 forms a Glycyl lysine isopeptide (Lys-Gly) (interchain with G-Cter in SUMO2) linkage. Residues 145–167 (YIGNECGKAFRVSSSLINHQMIH) form a C2H2-type 1; degenerate zinc finger. Residues 173 to 195 (YRCNESGKAFHRGSLLTVHQIVH) form a C2H2-type 2; degenerate zinc finger. 13 C2H2-type zinc fingers span residues 201–223 (YQCD…RRSH), 229–251 (YICN…QRIH), 257–279 (YKCN…QTVH), 285–307 (YKCN…HIIH), 313–335 (YTCD…QIIH), 341–363 (YKCN…RRIH), 369–391 (YKCN…QRVH), 397–419 (YKCN…QRIH), 425–447 (YKCN…MRCH), 453–475 (LHCN…QRMH), 481–503 (YKCN…RRSH), 509–531 (FQCN…RKIH), and 537–559 (YKCN…LVIH). Residues Lys554 and Lys579 each participate in a glycyl lysine isopeptide (Lys-Gly) (interchain with G-Cter in SUMO2) cross-link. The C2H2-type 16; degenerate zinc-finger motif lies at 565-587 (YHCNEFGEAFIQSSKLARYHRNP). 7 consecutive C2H2-type zinc fingers follow at residues 593–615 (HKCS…QRRH), 621–643 (YKCI…RRIH), 649–671 (YKCN…WSIH), 677–699 (YKCN…QMMH), 705–727 (YKCN…QRNH), 733–755 (YKCM…QRIH), and 761–783 (YKCN…QIKH). A Glycyl lysine isopeptide (Lys-Gly) (interchain with G-Cter in SUMO2) cross-link involves residue Lys791.

Belongs to the krueppel C2H2-type zinc-finger protein family.

It localises to the nucleus. May be involved in transcriptional regulation. The protein is Zinc finger protein 841 (ZNF841) of Homo sapiens (Human).